We begin with the raw amino-acid sequence, 403 residues long: Palmitoyltransferase ZDHHC23-A (403 aa).

Residues 1–70 lie on the Cytoplasmic side of the membrane; that stretch reads MKRERFKPPE…ADRLGVSCCT (70 aa). The helical transmembrane segment at 71-91 threads the bilayer; sequence VGPLRLELSVLPPMVLIPGLL. Arg-92 is a topological domain (lumenal). Residues 93–113 traverse the membrane as a helical segment; that stretch reads VAAINCLLGVIILTALPLLVL. Residues 114-125 are Cytoplasmic-facing; the sequence is WYYYMTHRRKRR. The chain crosses the membrane as a helical span at residues 126 to 146; sequence TLFFLSLALFSLAYMYYLFLT. At 147-153 the chain is on the lumenal side; it reads EIVPRGD. Residues 154-174 form a helical membrane-spanning segment; that stretch reads VTHLQVVTATTGMMLTLISLV. At 175–268 the chain is on the cytoplasmic side; sequence RTKQGPGFVK…NSCVGQANHR (94 aa). The 51-residue stretch at 225-275 folds into the DHHC domain; the sequence is KKCPVCQLVRPPRAGHCRICGACVLRMDHHCVWINSCVGQANHRQFILTLL. Cys-255 serves as the catalytic S-palmitoyl cysteine intermediate. Residues 269-289 traverse the membrane as a helical segment; the sequence is QFILTLLLFLLTSFYGISLVL. Topologically, residues 290 to 319 are lumenal; that stretch reads RSICPKQSLFTAMLYCPGVYNQYSTALCFT. The helical transmembrane segment at 320–340 threads the bilayer; that stretch reads CVWYSVIITGGLLHLFILQII. Topologically, residues 341–403 are cytoplasmic; it reads NVSCNVTERE…GSSLNLTDMV (63 aa).

It belongs to the DHHC palmitoyltransferase family.

It localises to the golgi apparatus membrane. The protein resides in the golgi apparatus. Its subcellular location is the trans-Golgi network membrane. It catalyses the reaction L-cysteinyl-[protein] + hexadecanoyl-CoA = S-hexadecanoyl-L-cysteinyl-[protein] + CoA. Palmitoyltransferase that could catalyze the addition of palmitate onto various protein substrates and be involved in a variety of cellular processes. In Danio rerio (Zebrafish), this protein is Palmitoyltransferase ZDHHC23-A (zdhhc23a).